We begin with the raw amino-acid sequence, 485 residues long: Ribosomal protein uS12 methylthiotransferase RimO (485 aa).

The region spanning serine 37–proline 147 is the MTTase N-terminal domain. [4Fe-4S] cluster contacts are provided by cysteine 46, cysteine 82, cysteine 111, cysteine 179, cysteine 183, and cysteine 186. One can recognise a Radical SAM core domain in the interval leucine 165–alanine 402. Positions lysine 405 to glutamate 471 constitute a TRAM domain.

The protein belongs to the methylthiotransferase family. RimO subfamily. Requires [4Fe-4S] cluster as cofactor.

The protein localises to the cytoplasm. The enzyme catalyses L-aspartate(89)-[ribosomal protein uS12]-hydrogen + (sulfur carrier)-SH + AH2 + 2 S-adenosyl-L-methionine = 3-methylsulfanyl-L-aspartate(89)-[ribosomal protein uS12]-hydrogen + (sulfur carrier)-H + 5'-deoxyadenosine + L-methionine + A + S-adenosyl-L-homocysteine + 2 H(+). Its function is as follows. Catalyzes the methylthiolation of an aspartic acid residue of ribosomal protein uS12. The sequence is that of Ribosomal protein uS12 methylthiotransferase RimO from Alteromonas mediterranea (strain DSM 17117 / CIP 110805 / LMG 28347 / Deep ecotype).